The chain runs to 238 residues: Phosphoribosylaminoimidazole-succinocarboxamide synthase (238 aa).

This sequence belongs to the SAICAR synthetase family.

The enzyme catalyses 5-amino-1-(5-phospho-D-ribosyl)imidazole-4-carboxylate + L-aspartate + ATP = (2S)-2-[5-amino-1-(5-phospho-beta-D-ribosyl)imidazole-4-carboxamido]succinate + ADP + phosphate + 2 H(+). The protein operates within purine metabolism; IMP biosynthesis via de novo pathway; 5-amino-1-(5-phospho-D-ribosyl)imidazole-4-carboxamide from 5-amino-1-(5-phospho-D-ribosyl)imidazole-4-carboxylate: step 1/2. The sequence is that of Phosphoribosylaminoimidazole-succinocarboxamide synthase from Methanococcoides burtonii (strain DSM 6242 / NBRC 107633 / OCM 468 / ACE-M).